A 298-amino-acid chain; its full sequence is uncharacterized protein (298 aa).

The protein belongs to the glycosyltransferase 2 family.

This is an uncharacterized protein from Mycoplasma genitalium (strain ATCC 33530 / DSM 19775 / NCTC 10195 / G37) (Mycoplasmoides genitalium).